A 716-amino-acid polypeptide reads, in one-letter code: Zinc finger CCCH domain-containing protein 30 (716 aa).

ANK repeat units follow at residues 90–120 (DYRT…DVNR) and 125–157 (DQTT…DLNL). Residues 201-231 (VTNVPNRSSSPCHSPTGENGGSGSGSPLGSP) form a disordered region. Positions 203–213 (NVPNRSSSPCH) are enriched in polar residues. 2 C3H1-type zinc fingers span residues 306–328 (PCPD…HGVF) and 336–360 (QYRT…HTPE). Residues 521–562 (FQQQQQQQQSMLSPINTSFSSPKSVDHSLFSGGGRMSPRNVV) are disordered. Residues 530 to 543 (SMLSPINTSFSSPK) are compositionally biased toward polar residues. At Ser566 the chain carries Phosphoserine. Residues 583–594 (QQQQQQQQQQHQ) are compositionally biased toward low complexity. Disordered regions lie at residues 583–638 (QQQQ…MSSE) and 667–692 (PAEA…PVEP). The span at 605 to 630 (TNSSPIVGSPVNNNTWSSKWGSSNGQ) shows a compositional bias: polar residues.

The polypeptide is Zinc finger CCCH domain-containing protein 30 (Arabidopsis thaliana (Mouse-ear cress)).